A 182-amino-acid polypeptide reads, in one-letter code: Succinate dehydrogenase [ubiquinone] cytochrome b small subunit, mitochondrial (182 aa).

The Mitochondrial matrix portion of the chain corresponds to 1–71 (MSLSLLLRGA…SAPRMASAGS (71 aa)). A helical membrane pass occupies residues 72–96 (SHTLLWTVERIVSAGLLAVIPAAFI). The Mitochondrial intermembrane portion of the chain corresponds to 97 to 101 (APSQV). Residues 102–122 (LDALMAISVVIHTHWGVEAMV) traverse the membrane as a helical segment. H113 contacts heme. Residues 123-135 (VDYMRPSVVGNVL) lie on the Mitochondrial matrix side of the membrane. Y125 is a binding site for a ubiquinone. Residues 136 to 157 (PKVAHIALIIISVATLGGLFYF) form a helical membrane-spanning segment. Residues 158 to 182 (IQNDVGLANGIKRFWAIKGKDAEKA) lie on the Mitochondrial intermembrane side of the membrane.

This sequence belongs to the CybS family. As to quaternary structure, forms part of complex II containing four subunits: a flavoprotein (FP), an iron-sulfur protein (IP) and a cytochrome b composed of a large and a small subunit.

The protein resides in the mitochondrion inner membrane. It functions in the pathway carbohydrate metabolism; tricarboxylic acid cycle. Membrane-anchoring subunit of succinate dehydrogenase (SDH) that is involved in complex II of the mitochondrial electron transport chain and is responsible for transferring electrons from succinate to ubiquinone (coenzyme Q). The polypeptide is Succinate dehydrogenase [ubiquinone] cytochrome b small subunit, mitochondrial (Drosophila melanogaster (Fruit fly)).